Reading from the N-terminus, the 333-residue chain is Phospholipid phosphatase-related protein type 1 (333 aa).

A run of 3 helical transmembrane segments spans residues 12–32, 66–86, and 126–146; these read IIPC…LLAY, FIQP…IIFV, and FIGV…AGQV. Asn162 carries N-linked (GlcNAc...) asparagine glycosylation. The next 3 helical transmembrane spans lie at 200–217, 223–243, and 256–276; these read ASLS…ITST, SRLA…LTGL, and VVAG…CVVN.

The protein belongs to the PA-phosphatase related phosphoesterase family.

The protein localises to the cell membrane. Its subcellular location is the cell projection. It localises to the neuron projection. In terms of biological role, may play a role in neurite outgrowth and neurogenesis. This is Phospholipid phosphatase-related protein type 1 (plppr1) from Danio rerio (Zebrafish).